The chain runs to 182 residues: Ribosome maturation factor RimM (182 aa).

Residues 102-182 (EEGDYYWKDL…TIEVDWDPGF (81 aa)) enclose the PRC barrel domain.

The protein belongs to the RimM family. As to quaternary structure, binds ribosomal protein uS19.

Its subcellular location is the cytoplasm. Functionally, an accessory protein needed during the final step in the assembly of 30S ribosomal subunit, possibly for assembly of the head region. Essential for efficient processing of 16S rRNA. May be needed both before and after RbfA during the maturation of 16S rRNA. It has affinity for free ribosomal 30S subunits but not for 70S ribosomes. This is Ribosome maturation factor RimM from Klebsiella pneumoniae (strain 342).